A 550-amino-acid chain; its full sequence is Methionine--tRNA ligase (550 aa).

The 'HIGH' region motif lies at 13–23; it reads PYANGEIHLGH. Zn(2+)-binding residues include Cys144, Cys147, Cys157, and Cys160. Positions 329–333 match the 'KMSKS' region motif; it reads KMSKS. Lys332 lines the ATP pocket.

Belongs to the class-I aminoacyl-tRNA synthetase family. MetG type 1 subfamily. Monomer. Requires Zn(2+) as cofactor.

It is found in the cytoplasm. It carries out the reaction tRNA(Met) + L-methionine + ATP = L-methionyl-tRNA(Met) + AMP + diphosphate. In terms of biological role, is required not only for elongation of protein synthesis but also for the initiation of all mRNA translation through initiator tRNA(fMet) aminoacylation. The chain is Methionine--tRNA ligase from Ruthia magnifica subsp. Calyptogena magnifica.